Here is a 208-residue protein sequence, read N- to C-terminus: ATP-dependent Clp protease proteolytic subunit (208 aa).

Serine 98 (nucleophile) is an active-site residue. Histidine 123 is an active-site residue.

Belongs to the peptidase S14 family. As to quaternary structure, fourteen ClpP subunits assemble into 2 heptameric rings which stack back to back to give a disk-like structure with a central cavity, resembling the structure of eukaryotic proteasomes.

Its subcellular location is the cytoplasm. It carries out the reaction Hydrolysis of proteins to small peptides in the presence of ATP and magnesium. alpha-casein is the usual test substrate. In the absence of ATP, only oligopeptides shorter than five residues are hydrolyzed (such as succinyl-Leu-Tyr-|-NHMec, and Leu-Tyr-Leu-|-Tyr-Trp, in which cleavage of the -Tyr-|-Leu- and -Tyr-|-Trp bonds also occurs).. In terms of biological role, cleaves peptides in various proteins in a process that requires ATP hydrolysis. Has a chymotrypsin-like activity. Plays a major role in the degradation of misfolded proteins. The sequence is that of ATP-dependent Clp protease proteolytic subunit from Wolbachia sp. subsp. Drosophila simulans (strain wRi).